The primary structure comprises 79 residues: Sulfur carrier protein TusA (79 aa).

Catalysis depends on Cys15, which acts as the Cysteine persulfide intermediate.

It belongs to the sulfur carrier protein TusA family. In terms of assembly, interacts with IscS.

Its subcellular location is the cytoplasm. Its pathway is tRNA modification. Sulfur carrier protein involved in sulfur trafficking in the cell. Part of a sulfur-relay system required for 2-thiolation during synthesis of 2-thiouridine of the modified wobble base 5-methylaminomethyl-2-thiouridine (mnm(5)s(2)U) in tRNA. Interacts with IscS and stimulates its cysteine desulfurase activity. Accepts an activated sulfur from IscS, which is then transferred to TusD, and thus determines the direction of sulfur flow from IscS to 2-thiouridine formation. Also appears to be involved in sulfur transfer for the biosynthesis of molybdopterin. The sequence is that of Sulfur carrier protein TusA from Buchnera aphidicola subsp. Baizongia pistaciae (strain Bp).